The chain runs to 654 residues: RING finger protein 112 (654 aa).

An RING-type zinc finger spans residues 80–121; the sequence is CSICLERLREPISLDCGHDFCIRCFSTHRIPGCELPCCPECR. Residues 154–654 are interaction with ZBTB16; sequence AVRAERLLLV…GDREPLLQEE (501 aa). One can recognise a GB1/RHD3-type G domain in the interval 189 to 420; it reads DTPVCLLAVL…YILDVLSTAP (232 aa). 340–341 contributes to the GTP binding site; it reads RD. 2 helical membrane-spanning segments follow: residues 570-590 and 603-623; these read LAAV…GVVG and GMVA…GGGV.

Belongs to the TRAFAC class dynamin-like GTPase superfamily. GB1/RHD3 GTPase family. GB1 subfamily. In terms of assembly, self-associates. Interacts with SP1 in an oxidative stress-regulated manner. Interacts with SIGMAR1 in an oxidative stress-regulated manner. Interacts with ZBTB16 (via C2H2-type zinc finger domains 1 and 2). Post-translationally, auto-ubiquitinated. As to expression, expressed in most of the brain areas, including cortex, striatum, hippocampus, thalamus, and cerebellum (at protein level). Expressed in lateral amygdaloid nucleus, and ventromedial hypothalamus. Also expressed strongly in the marginal zone of brain vesicles, optic stalk, and cartilage primordium.

The protein resides in the membrane. It localises to the cytoplasm. It is found in the nucleus. The protein localises to the nuclear body. Its subcellular location is the nucleoplasm. The protein resides in the endosome. It localises to the cytoplasmic vesicle. It is found in the secretory vesicle. The protein localises to the synaptic vesicle. Its subcellular location is the postsynaptic density. The protein resides in the perikaryon. It localises to the cell projection. It is found in the neuron projection. It carries out the reaction S-ubiquitinyl-[E2 ubiquitin-conjugating enzyme]-L-cysteine + [acceptor protein]-L-lysine = [E2 ubiquitin-conjugating enzyme]-L-cysteine + N(6)-ubiquitinyl-[acceptor protein]-L-lysine.. It functions in the pathway protein modification; protein ubiquitination. E3 ubiquitin-protein ligase that plays an important role in neuronal differentiation, including neurogenesis and gliogenesis, during brain development. During embryonic development initiates neuronal differentiation by inducing cell cycle arrest at the G0/G1 phase through up-regulation of cell-cycle regulatory proteins. Plays a role not only in the fetal period during the development of the nervous system, but also in the adult brain, where it is involved in the maintenance of neural functions and protection of the nervous tissue cells from oxidative stress-induced damage. Exhibits GTPase and E3 ubiquitin-protein ligase activities. Regulates dendritic spine density and synaptic neurotransmission; its ability to hydrolyze GTP is involved in the maintenance of dendritic spine density. The polypeptide is RING finger protein 112 (Rnf112) (Mus musculus (Mouse)).